Consider the following 220-residue polypeptide: UPF0758 protein Asuc_0013 (220 aa).

Residues 98 to 220 form the MPN domain; that stretch reads EFTNPLTVRL…YFSFAEQDWL (123 aa). The Zn(2+) site is built by His-169, His-171, and Asp-182. The JAMM motif signature appears at 169-182; sequence HNHPSGSAEPSASD.

It belongs to the UPF0758 family.

The sequence is that of UPF0758 protein Asuc_0013 from Actinobacillus succinogenes (strain ATCC 55618 / DSM 22257 / CCUG 43843 / 130Z).